The following is a 300-amino-acid chain: uncharacterized protein (300 aa).

This sequence belongs to the chlamydial CPn_0593/CT_474/TC_0759 family.

This is an uncharacterized protein from Chlamydia muridarum (strain MoPn / Nigg).